A 284-amino-acid chain; its full sequence is Formate channel FocA (284 aa).

At 1–34 (MASENQKLSSVALTPVEATDYAENTATYKANKRP) the chain is on the cytoplasmic side. A helical transmembrane segment spans residues 35 to 55 (FLSFMSGISAGACIALAFVFY). The Periplasmic segment spans residues 56 to 72 (TTTQTASAGAPWGLTKL). A helical transmembrane segment spans residues 73-93 (VGGLVFSLGVIMVVILGSELF). Over 94-116 (TSSTLTLVARVGGRITTTQMIRN) the chain is Cytoplasmic. A helical membrane pass occupies residues 117–137 (WIVVYLGNFVGGLFIAAVIWF). At 138 to 163 (SGQTMAANGQWGLTILATAQHKIHHT) the chain is on the periplasmic side. Residues 164 to 184 (WFEAFNLGILCNIMVCVAVWM) traverse the membrane as a helical segment. At 185–194 (SYSGKTVTDK) the chain is on the cytoplasmic side. A helical transmembrane segment spans residues 195–215 (AFIMIMPIGLFVASGFEHCVA). Topologically, residues 216-252 (NMFMIPMGIITAHFSTPEFWQQIGVDPMKYADLDLYH) are periplasmic. The chain crosses the membrane as a helical span at residues 253 to 273 (FIVKNLIPVTLGNIVGGAICI). Over 274 to 284 (GVFQRYLTKTH) the chain is Cytoplasmic.

This sequence belongs to the FNT transporter (TC 1.A.16) family. As to quaternary structure, homopentamer.

It is found in the cell inner membrane. The enzyme catalyses formate(in) = formate(out). Involved in the bidirectional transport of formate during mixed-acid fermentation. Functions to maintain relatively constant intracellular formate levels during growth, using different mechanisms for efflux and uptake of the anion. This Haemophilus influenzae (strain ATCC 51907 / DSM 11121 / KW20 / Rd) protein is Formate channel FocA (focA).